The primary structure comprises 628 residues: Glutamyl-tRNA(Gln) amidotransferase subunit E (628 aa).

It belongs to the GatB/GatE family. GatE subfamily. Heterodimer of GatD and GatE.

The enzyme catalyses L-glutamyl-tRNA(Gln) + L-glutamine + ATP + H2O = L-glutaminyl-tRNA(Gln) + L-glutamate + ADP + phosphate + H(+). Functionally, allows the formation of correctly charged Gln-tRNA(Gln) through the transamidation of misacylated Glu-tRNA(Gln) in organisms which lack glutaminyl-tRNA synthetase. The reaction takes place in the presence of glutamine and ATP through an activated gamma-phospho-Glu-tRNA(Gln). The GatDE system is specific for glutamate and does not act on aspartate. The polypeptide is Glutamyl-tRNA(Gln) amidotransferase subunit E (Thermococcus gammatolerans (strain DSM 15229 / JCM 11827 / EJ3)).